Here is a 199-residue protein sequence, read N- to C-terminus: CASP-like protein 2B1 (199 aa).

Residues Met-1–Arg-26 lie on the Cytoplasmic side of the membrane. The helical transmembrane segment at Leu-27–Ile-47 threads the bilayer. The Extracellular segment spans residues Ala-48–Lys-69. Residues Ala-70–Val-90 traverse the membrane as a helical segment. At Arg-91 to Pro-106 the chain is on the cytoplasmic side. The helical transmembrane segment at Leu-107–Ala-127 threads the bilayer. Over Ala-128 to Ala-164 the chain is Extracellular. A helical transmembrane segment spans residues Thr-165–Phe-185. The Cytoplasmic segment spans residues Arg-186–Trp-199.

The protein belongs to the Casparian strip membrane proteins (CASP) family. In terms of assembly, homodimer and heterodimers.

Its subcellular location is the cell membrane. The polypeptide is CASP-like protein 2B1 (Eutrema halophilum (Salt cress)).